A 733-amino-acid chain; its full sequence is Tyrosine-protein kinase ptk (733 aa).

The next 2 membrane-spanning stretches (helical) occupy residues 19–39 and 438–458; these read LFFSLIAQWKLIALCIILSLI and LQILILSIFLGGFLGTLLALL. 542–550 lines the ATP pocket; it reads GPAPEVGKS.

The protein belongs to the etk/wzc family. It depends on Mg(2+) as a cofactor. Requires Mn(2+) as cofactor. Autophosphorylated on several Tyr residues. Dephosphorylated by ptp.

It is found in the cell inner membrane. The catalysed reaction is L-tyrosyl-[protein] + ATP = O-phospho-L-tyrosyl-[protein] + ADP + H(+). It functions in the pathway glycan metabolism; exopolysaccharide biosynthesis. In terms of biological role, may be involved in the production and the transport of exopolysaccharides. The sequence is that of Tyrosine-protein kinase ptk (ptk) from Acinetobacter johnsonii.